Reading from the N-terminus, the 367-residue chain is tRNA/tmRNA (uracil-C(5))-methyltransferase (367 aa).

S-adenosyl-L-methionine is bound by residues Gln-182, Tyr-210, Asn-215, Glu-231, and Asp-293. Cys-318 acts as the Nucleophile in catalysis. The Proton acceptor role is filled by Glu-352.

It belongs to the class I-like SAM-binding methyltransferase superfamily. RNA M5U methyltransferase family. TrmA subfamily.

The enzyme catalyses uridine(54) in tRNA + S-adenosyl-L-methionine = 5-methyluridine(54) in tRNA + S-adenosyl-L-homocysteine + H(+). The catalysed reaction is uridine(341) in tmRNA + S-adenosyl-L-methionine = 5-methyluridine(341) in tmRNA + S-adenosyl-L-homocysteine + H(+). Functionally, dual-specificity methyltransferase that catalyzes the formation of 5-methyluridine at position 54 (m5U54) in all tRNAs, and that of position 341 (m5U341) in tmRNA (transfer-mRNA). The polypeptide is tRNA/tmRNA (uracil-C(5))-methyltransferase (Neisseria meningitidis serogroup C (strain 053442)).